We begin with the raw amino-acid sequence, 476 residues long: ATP synthase subunit beta, mitochondrial (476 aa).

Position 156-163 (Gly156–Val163) interacts with ATP.

F-type ATP synthases have 2 components, the catalytic core F(1) and the membrane-embedded component F(0), linked together by a central stalk and a peripheral stalk. The central stalk, also called rotor shaft, is often seen as part of F(1). The peripheral stalk is seen as part of F(0). F(0) contains the membrane channel next to the rotor. F-type ATP synthases form dimers but each monomer functions independently in ATP generation. The dimer consists of 18 different polypeptides: ATP1 (subunit alpha, part of F(1), 3 molecules per monomer), ATP2 (subunit beta, part of F(1), 3 molecules per monomer), ATP3 (subunit gamma, part of the central stalk), ATP4 (subunit b, part of the peripheral stalk), ATP5/OSCP (subunit 5/OSCP, part of the peripheral stalk), ATP6 (subunit a, part of the peripheral stalk), ATP7 (subunit d, part of the peripheral stalk), ATP8 (subunit 8, part of the peripheral stalk), OLI1 (subunit c, part of the rotor, 10 molecules per monomer), ATP14 (subunit h, part of the peripheral stalk), ATP15 (subunit epsilon, part of the central stalk), ATP16 (subunit delta, part of the central stalk), ATP17 (subunit f, part of the peripheral stalk), ATP18 (subunit i/j, part of the peripheral stalk). Dimer-specific subunits are ATP19 (subunit k, at interface between monomers), ATP20 (subunit g, at interface between monomers), TIM11 (subunit e, at interface between monomers). Also contains subunit L.

The protein resides in the mitochondrion inner membrane. The catalysed reaction is ATP + H2O + 4 H(+)(in) = ADP + phosphate + 5 H(+)(out). Its function is as follows. Mitochondrial membrane ATP synthase (F(1)F(0) ATP synthase or Complex V) produces ATP from ADP in the presence of a proton gradient across the membrane which is generated by electron transport complexes of the respiratory chain. F-type ATP synthases consist of two structural domains, F(1) - containing the extramembraneous catalytic core, and F(0) - containing the membrane proton channel, linked together by a central stalk and a peripheral stalk. During catalysis, ATP synthesis in the catalytic domain of F(1) is coupled via a rotary mechanism of the central stalk subunits to proton translocation. Subunits alpha/ATP1 and beta/ATP2 form the catalytic core in F(1). Rotation of the central stalk against the surrounding alpha/ATP1(3)beta/ATP2(3) subunits leads to hydrolysis of ATP in three separate catalytic sites on the beta/ATP2 subunits. The chain is ATP synthase subunit beta, mitochondrial from Pichia angusta (Yeast).